We begin with the raw amino-acid sequence, 236 residues long: Orotidine 5'-phosphate decarboxylase (236 aa).

Residues D14, K36, 63-72, T122, R183, Q192, G212, and R213 each bind substrate; that span reads DLKFHDIPNT. Catalysis depends on K65, which acts as the Proton donor.

Belongs to the OMP decarboxylase family. Type 1 subfamily. As to quaternary structure, homodimer.

It carries out the reaction orotidine 5'-phosphate + H(+) = UMP + CO2. The protein operates within pyrimidine metabolism; UMP biosynthesis via de novo pathway; UMP from orotate: step 2/2. Functionally, catalyzes the decarboxylation of orotidine 5'-monophosphate (OMP) to uridine 5'-monophosphate (UMP). The protein is Orotidine 5'-phosphate decarboxylase of Chromohalobacter salexigens (strain ATCC BAA-138 / DSM 3043 / CIP 106854 / NCIMB 13768 / 1H11).